Reading from the N-terminus, the 882-residue chain is Alanine--tRNA ligase (882 aa).

Positions 564, 568, 666, and 670 each coordinate Zn(2+).

This sequence belongs to the class-II aminoacyl-tRNA synthetase family. The cofactor is Zn(2+).

It localises to the cytoplasm. The catalysed reaction is tRNA(Ala) + L-alanine + ATP = L-alanyl-tRNA(Ala) + AMP + diphosphate. In terms of biological role, catalyzes the attachment of alanine to tRNA(Ala) in a two-step reaction: alanine is first activated by ATP to form Ala-AMP and then transferred to the acceptor end of tRNA(Ala). Also edits incorrectly charged Ser-tRNA(Ala) and Gly-tRNA(Ala) via its editing domain. This is Alanine--tRNA ligase from Rubrobacter xylanophilus (strain DSM 9941 / JCM 11954 / NBRC 16129 / PRD-1).